The sequence spans 119 residues: MPDYSYRPTIGPTYVYHNKYYKNLGSVIKKPKRKKHLVEHEEEEKDPLDNYMVAEDPFLGPGKNQKLTLFKEIRNVKPDTMKLIVNWSGKEFLRETWTRFVEDSFPIVNDQEVMDVFLV.

This sequence belongs to the polyhedrin family.

In terms of biological role, major component of the virus occlusion bodies, which are large proteinaceous structures (polyhedra), that protect the virus from the outside environment for extended periods until they are ingested by insect larvae. This chain is Polyhedrin (PH), found in Antheraea pernyi nuclear polyhedrosis virus (ApNPV).